A 417-amino-acid polypeptide reads, in one-letter code: UPF0761 membrane protein CV_0810 (417 aa).

The next 7 membrane-spanning stretches (helical) occupy residues 52 to 72 (LLAL…FPVF), 79 to 99 (FKIM…ITVY), 110 to 130 (LTAA…STIE), 150 to 170 (MVYW…LLSW), 185 to 205 (LLAS…VLAL), 214 to 234 (FVPF…LELT), and 258 to 278 (IPIF…GAVF).

This sequence belongs to the UPF0761 family.

It is found in the cell inner membrane. This Chromobacterium violaceum (strain ATCC 12472 / DSM 30191 / JCM 1249 / CCUG 213 / NBRC 12614 / NCIMB 9131 / NCTC 9757 / MK) protein is UPF0761 membrane protein CV_0810.